Here is a 100-residue protein sequence, read N- to C-terminus: uncharacterized protein (100 aa).

It localises to the cytoplasm. It is found in the endoplasmic reticulum. This is an uncharacterized protein from Schizosaccharomyces pombe (strain 972 / ATCC 24843) (Fission yeast).